The following is a 207-amino-acid chain: Large ribosomal subunit protein uL4 (207 aa).

Residues 53 to 85 form a disordered region; sequence ERSDVARTGKKFGRQKGGGTARHGDRKAPIFIG.

It belongs to the universal ribosomal protein uL4 family. As to quaternary structure, part of the 50S ribosomal subunit.

Its function is as follows. One of the primary rRNA binding proteins, this protein initially binds near the 5'-end of the 23S rRNA. It is important during the early stages of 50S assembly. It makes multiple contacts with different domains of the 23S rRNA in the assembled 50S subunit and ribosome. In terms of biological role, forms part of the polypeptide exit tunnel. This is Large ribosomal subunit protein uL4 from Novosphingobium aromaticivorans (strain ATCC 700278 / DSM 12444 / CCUG 56034 / CIP 105152 / NBRC 16084 / F199).